A 479-amino-acid polypeptide reads, in one-letter code: Ribosomal RNA small subunit methyltransferase F (479 aa).

S-adenosyl-L-methionine-binding positions include 125 to 131 (AAAPGSK), glutamate 149, aspartate 176, and aspartate 194. The Nucleophile role is filled by cysteine 247.

It belongs to the class I-like SAM-binding methyltransferase superfamily. RsmB/NOP family.

Its subcellular location is the cytoplasm. It carries out the reaction cytidine(1407) in 16S rRNA + S-adenosyl-L-methionine = 5-methylcytidine(1407) in 16S rRNA + S-adenosyl-L-homocysteine + H(+). In terms of biological role, specifically methylates the cytosine at position 1407 (m5C1407) of 16S rRNA. The polypeptide is Ribosomal RNA small subunit methyltransferase F (Salmonella agona (strain SL483)).